We begin with the raw amino-acid sequence, 500 residues long: Glycerol kinase (500 aa).

Thr-13 is a binding site for ADP. The ATP site is built by Thr-13, Thr-14, and Ser-15. Thr-13 is a sn-glycerol 3-phosphate binding site. Arg-17 is an ADP binding site. The sn-glycerol 3-phosphate site is built by Arg-83, Glu-84, Tyr-135, and Asp-244. The glycerol site is built by Arg-83, Glu-84, Tyr-135, Asp-244, and Gln-245. Residues Thr-266 and Gly-309 each coordinate ADP. ATP contacts are provided by Thr-266, Gly-309, Gln-313, and Gly-410. Positions 410 and 414 each coordinate ADP.

Belongs to the FGGY kinase family.

The enzyme catalyses glycerol + ATP = sn-glycerol 3-phosphate + ADP + H(+). The protein operates within polyol metabolism; glycerol degradation via glycerol kinase pathway; sn-glycerol 3-phosphate from glycerol: step 1/1. Inhibited by fructose 1,6-bisphosphate (FBP). Key enzyme in the regulation of glycerol uptake and metabolism. Catalyzes the phosphorylation of glycerol to yield sn-glycerol 3-phosphate. The protein is Glycerol kinase of Burkholderia vietnamiensis (strain G4 / LMG 22486) (Burkholderia cepacia (strain R1808)).